The sequence spans 451 residues: Adenylyltransferase and sulfurtransferase MOCS3-1 (451 aa).

The tract at residues 42 to 62 (GEDSDEAEESSNDMPTPQTKL) is disordered. A compositionally biased stretch (acidic residues) spans 43-52 (EDSDEAEESS). A Phosphothreonine modification is found at Thr60. ATP contacts are provided by residues Gly99, Asp120, 127 to 131 (SNLHR), Lys144, and 188 to 189 (DN). Cys229 and Cys232 together coordinate Zn(2+). Cys246 serves as the catalytic Glycyl thioester intermediate; for adenylyltransferase activity. Positions 304 and 307 each coordinate Zn(2+). The Rhodanese domain maps to 353–449 (QSQPHLLLDV…WTGSVDATFP (97 aa)). Cys408 acts as the Cysteine persulfide intermediate; for sulfurtransferase activity in catalysis.

The protein in the N-terminal section; belongs to the HesA/MoeB/ThiF family. UBA4 subfamily. Requires Zn(2+) as cofactor.

It is found in the cytoplasm. The enzyme catalyses [molybdopterin-synthase sulfur-carrier protein]-C-terminal Gly-Gly + ATP + H(+) = [molybdopterin-synthase sulfur-carrier protein]-C-terminal Gly-Gly-AMP + diphosphate. The catalysed reaction is [molybdopterin-synthase sulfur-carrier protein]-C-terminal Gly-Gly-AMP + S-sulfanyl-L-cysteinyl-[cysteine desulfurase] + AH2 = [molybdopterin-synthase sulfur-carrier protein]-C-terminal-Gly-aminoethanethioate + L-cysteinyl-[cysteine desulfurase] + A + AMP + 2 H(+). It functions in the pathway tRNA modification; 5-methoxycarbonylmethyl-2-thiouridine-tRNA biosynthesis. It participates in cofactor biosynthesis; molybdopterin biosynthesis. In terms of biological role, plays a central role in 2-thiolation of mcm(5)S(2)U at tRNA wobble positions of cytosolic tRNA(Lys), tRNA(Glu) and tRNA(Gln). Also essential during biosynthesis of the molybdenum cofactor. Acts by mediating the C-terminal thiocarboxylation of sulfur carriers URM1 and MOCS2A. Its N-terminus first activates URM1 and MOCS2A as acyl-adenylates (-COAMP), then the persulfide sulfur on the catalytic cysteine is transferred to URM1 and MOCS2A to form thiocarboxylation (-COSH) of their C-terminus. The reaction probably involves hydrogen sulfide that is generated from the persulfide intermediate and that acts as a nucleophile towards URM1 and MOCS2A. Subsequently, a transient disulfide bond is formed. Does not use thiosulfate as sulfur donor; NFS1 probably acting as a sulfur donor for thiocarboxylation reactions. In Drosophila pseudoobscura pseudoobscura (Fruit fly), this protein is Adenylyltransferase and sulfurtransferase MOCS3-1.